Consider the following 245-residue polypeptide: Uridylate kinase (245 aa).

Residue 15 to 18 participates in ATP binding; that stretch reads KLSG. Residues 23 to 28 are involved in allosteric activation by GTP; the sequence is GEEGFG. Glycine 57 serves as a coordination point for UMP. Glycine 58 and arginine 62 together coordinate ATP. UMP contacts are provided by residues aspartate 77 and 138-145; that span reads TGNPFCTT. Residues threonine 165, tyrosine 171, and aspartate 174 each coordinate ATP.

The protein belongs to the UMP kinase family. As to quaternary structure, homohexamer.

The protein resides in the cytoplasm. The catalysed reaction is UMP + ATP = UDP + ADP. It participates in pyrimidine metabolism; CTP biosynthesis via de novo pathway; UDP from UMP (UMPK route): step 1/1. Its activity is regulated as follows. Allosterically activated by GTP. Inhibited by UTP. Its function is as follows. Catalyzes the reversible phosphorylation of UMP to UDP. This is Uridylate kinase from Shewanella putrefaciens (strain CN-32 / ATCC BAA-453).